We begin with the raw amino-acid sequence, 654 residues long: MAIMHKIGCAGSEVETDRVLEKDQANNGHFVDSDCCFQETGSTGTANSICTLNDSEDDNSSLNSVDNNECTNLDCGGKKHKNLSPNPSFHVNINAAEFIPKSHNGYAPKSMNPPPEQLDSPCYPHFDQDSSSVIYPSPPSTYYPNMYVSANTFIPMPYAHYTDNMYHAKPVNRPNFLPREGTPPPFAQQPAEQFSPFNSEYESLLDFRALILGNLPVDYKISELLSLIHSGPLEKIQSNPGKRRIIITFLDSADAFFFYERYHPRGFIFHGRPLKLTFARPSPLPESIQNFCSNTAASRNVFIGNLPSSYHEKEIEEAFGKFGKIEHIKILSKKNIAFVHFLNIRDAIKVVRTLSCDPDYHSWRIFFGSDRCANHPPSFDERSCFTSKQNPDTTSDRCRQQESKDNGNRTVFLGNLHTKTKGHEICDLIRHGGLQDFHYIPEKHICFVTFITYSAANAFHDYLAEEEVLLHGRRIKVGWGKESGPLPRVLEDSILMGASRNVYFSHISDSLTTEELELILRQYGEIESIKYLKNRSSGFVAYTNISNAMKAVNGLPIHPLFKKSKIRYAPDRCEQELQKSKSNSPIQQNVPLQQFITPPFSYPVAYCPAIPPGSDPILNFGIQYQPFIPFTAVPSFPFNCNVPNYPQTSDHEND.

The 57-residue stretch at 299–355 folds into the RRM 1 domain; that stretch reads RNVFIGNLPSSYHEKEIEEAFGKFGKIEHIKILSKKNIAFVHFLNIRDAIKVVRTLS. A disordered region spans residues 383 to 404; sequence SCFTSKQNPDTTSDRCRQQESK. Polar residues predominate over residues 384-393; sequence CFTSKQNPDT. The segment covering 394 to 404 has biased composition (basic and acidic residues); the sequence is TSDRCRQQESK. RRM domains are found at residues 409 to 482 and 500 to 571; these read RTVF…WGKE and RNVY…YAPD.

The protein resides in the cytoplasm. Functionally, has a role in meiosis. The chain is Meiotically up-regulated gene 24 protein (mug24) from Schizosaccharomyces pombe (strain 972 / ATCC 24843) (Fission yeast).